The following is a 545-amino-acid chain: Heparanase (545 aa).

An N-terminal signal peptide occupies residues 1–37 (MLACRKPGLRPPLLLLLPLLGPLGPCSPGTPAAAAPA). A heparan sulfate group-binding site is contributed by 64-66 (DAN). Residues 112-159 (PAFEERSYWLSQSNQDICKSGSIPSDVEEKLRLEWPFQEQVLLREQYQ) constitute a propeptide, linker peptide. A disulfide bond links cysteine 129 and cysteine 181. Position 160–164 (160–164 (KKFTN)) interacts with heparan sulfate group. N-linked (GlcNAc...) asparagine glycosylation is found at asparagine 164 and asparagine 219. Residue glutamate 227 is the Proton donor of the active site. Residues 272–282 (QPRRNTVKMLK), histidine 298, and arginine 305 each bind heparan sulfate group. A required for heterodimerization with the heparanase 8 kDa subunit region spans residues 290 to 419 (EVIDSVTWHH…LLFKKLVGNK (130 aa)). Glutamate 345 acts as the Nucleophile in catalysis. Residues 350–352 (FGG) and 391–393 (GNY) each bind heparan sulfate group. Cysteine 439 and cysteine 544 are oxidised to a cystine. Residue asparagine 461 is glycosylated (N-linked (GlcNAc...) asparagine). The required for transferring proheparanase to the Golgi apparatus, secretion and subsequent enzyme activity and for enhancement of PKB/AKT1 phosphorylation stretch occupies residues 529 to 545 (FSYGFFVIRNAKVAACI).

This sequence belongs to the glycosyl hydrolase 79 family. In terms of assembly, heterodimer; heterodimer formation between the 8 kDa and the 50 kDa subunits is required for enzyme activity. Interacts with TF; the interaction, inhibited by heparin, enhances the generation of activated factor X and activates coagulation. Interacts with HRG; the interaction is enhanced at acidic pH, partially inhibits binding of HPSE to cell surface receptors and modulates its enzymatic activity. Interacts with SDC1; the interaction enhances the shedding of SDC1. Interacts with HPSE2. In terms of processing, proteolytically processed. The cleavage of the 65 kDa form leads to the generation of a linker peptide, and the 8 kDa and the 50 kDa products. The active form, the 8/50 kDa heterodimer, is resistant to degradation. Complete removal of the linker peptide appears to be a prerequisite to the complete activation of the enzyme. Post-translationally, N-glycosylated. Glycosylation of the 50 kDa subunit appears to be essential for its solubility. As to expression, highly expressed in placenta and weakly in the kidney, lung, spleen and uterus.

The protein resides in the lysosome membrane. It localises to the secreted. Its subcellular location is the nucleus. It catalyses the reaction endohydrolysis of (1-&gt;4)-beta-D-glycosidic bonds of heparan sulfate chains in heparan sulfate proteoglycan.. Its activity is regulated as follows. Inhibited by laminarin sulfate and, to a lower extent, by heparin, sulfamin and EDTA. Activated by calcium and magnesium. Its function is as follows. Endoglycosidase that cleaves heparan sulfate proteoglycans (HSPGs) into heparan sulfate side chains and core proteoglycans. Participates in extracellular matrix (ECM) degradation and remodeling. Selectively cleaves the linkage between a glucuronic acid unit and an N-sulfo glucosamine unit carrying either a 3-O-sulfo or a 6-O-sulfo group. Can also cleave the linkage between a glucuronic acid unit and an N-sulfo glucosamine unit carrying a 2-O-sulfo group, but not linkages between a glucuronic acid unit and a 2-O-sulfated iduronic acid moiety. Essentially inactive at neutral pH but becomes active under acidic conditions such as during tumor invasion and in inflammatory processes. Facilitates cell migration associated with metastasis, wound healing and inflammation. Enhances shedding of syndecans. Acts as a procoagulant by enhancing the generation of activated factor X/F10 in the presence of tissue factor/TF and activated factor VII/F7. Independent of its enzymatic activity, increases cell adhesion to the extracellular matrix (ECM). Enhances AKT1/PKB phosphorylation, possibly via interaction with a lipid raft-resident receptor. Plays a role in the regulation of osteogenesis. Enhances angiogenesis through up-regulation of SRC-mediated activation of VEGF. Implicated in hair follicle inner root sheath differentiation and hair homeostasis. The sequence is that of Heparanase (HPSE) from Bos taurus (Bovine).